A 66-amino-acid polypeptide reads, in one-letter code: Large ribosomal subunit protein bL31 (66 aa).

Zn(2+) is bound by residues C16, C18, C36, and C39.

It belongs to the bacterial ribosomal protein bL31 family. Type A subfamily. As to quaternary structure, part of the 50S ribosomal subunit. Zn(2+) serves as cofactor.

Functionally, binds the 23S rRNA. The protein is Large ribosomal subunit protein bL31 of Sulfurovum sp. (strain NBC37-1).